Consider the following 568-residue polypeptide: Urocanate hydratase (568 aa).

NAD(+) contacts are provided by residues 58–59 (GG), Q136, 182–184 (GMG), E202, R207, 248–249 (NA), 269–273 (QTSAH), 279–280 (YL), and Y328. The active site involves C416. G498 serves as a coordination point for NAD(+).

This sequence belongs to the urocanase family. Requires NAD(+) as cofactor.

Its subcellular location is the cytoplasm. It catalyses the reaction 4-imidazolone-5-propanoate = trans-urocanate + H2O. It participates in amino-acid degradation; L-histidine degradation into L-glutamate; N-formimidoyl-L-glutamate from L-histidine: step 2/3. In terms of biological role, catalyzes the conversion of urocanate to 4-imidazolone-5-propionate. The chain is Urocanate hydratase from Photobacterium profundum (strain SS9).